Here is a 376-residue protein sequence, read N- to C-terminus: 1-acyl-sn-glycerol-3-phosphate acyltransferase gamma (376 aa).

Residues 1-124 (MGLLAYLKTQ…LGSSKVLAKR (124 aa)) lie on the Cytoplasmic side of the membrane. Positions 96 to 101 (HNFEID) match the HXXXXD motif motif. A helical membrane pass occupies residues 125-145 (ELLCVPLIGWTWYFLEIVFCK). Over 146–316 (RKWEEDRDTV…TLLNFLCWAT (171 aa)) the chain is Lumenal. A helical transmembrane segment spans residues 317-339 (ILLSPLFSFVLGVFASGSPLLIL). Over 340–376 (TFLGFVGAASFGVRRLIGVTEIEKGSSYGNQELKKKE) the chain is Cytoplasmic.

Belongs to the 1-acyl-sn-glycerol-3-phosphate acyltransferase family. As to expression, widely expressed. Mainly expressed in testis, kidney and liver (at protein level).

It localises to the endoplasmic reticulum membrane. The protein localises to the nucleus envelope. It carries out the reaction a 1-acyl-sn-glycero-3-phosphate + an acyl-CoA = a 1,2-diacyl-sn-glycero-3-phosphate + CoA. The enzyme catalyses pentadecanoyl-CoA + 1-(9Z-octadecenoyl)-sn-glycero-3-phosphate = 1-(9Z)-octadecenoyl-2-pentadecanoyl-sn-glycero-3-phosphate + CoA. The catalysed reaction is heptadecanoyl-CoA + 1-(9Z-octadecenoyl)-sn-glycero-3-phosphate = 1-(9Z)-octadecenoyl-2-heptadecanoyl-sn-glycero-3-phosphate + CoA. It catalyses the reaction 1-(9Z-octadecenoyl)-sn-glycero-3-phosphate + octadecanoyl-CoA = 1-(9Z-octadecenoyl)-2-octadecanoyl-sn-glycero-3-phosphate + CoA. It carries out the reaction nonadecanoyl-CoA + 1-(9Z-octadecenoyl)-sn-glycero-3-phosphate = 1-(9Z)-octadecenoyl-2-nonadecanoyl-sn-glycero-3-phosphate + CoA. The enzyme catalyses 1-(9Z-octadecenoyl)-sn-glycero-3-phosphate + (5Z,8Z,11Z,14Z)-eicosatetraenoyl-CoA = 1-(9Z)-octadecenoyl-2-(5Z,8Z,11Z,14Z)-eicosatetraenoyl-sn-glycero-3-phosphate + CoA. The catalysed reaction is 1-(9Z-octadecenoyl)-sn-glycero-3-phosphate + (9Z)-octadecenoyl-CoA = 1,2-di-(9Z-octadecenoyl)-sn-glycero-3-phosphate + CoA. It catalyses the reaction 1-(9Z-octadecenoyl)-sn-glycero-3-phosphate + (9Z,12Z)-octadecadienoyl-CoA = 1-(9Z)-octadecenoyl-2-(9Z,12Z)-octadecadienoyl-sn-glycero-3-phosphate + CoA. It carries out the reaction 1-(9Z-octadecenoyl)-sn-glycero-3-phosphocholine + (5Z,8Z,11Z,14Z)-eicosatetraenoyl-CoA = 1-(9Z)-octadecenoyl-2-(5Z,8Z,11Z,14Z)-icosatetraenoyl-sn-glycero-3-phosphocholine + CoA. The enzyme catalyses 1-(9Z-octadecenoyl)-sn-glycero-3-phospho-(1D-myo-inositol) + (5Z,8Z,11Z,14Z)-eicosatetraenoyl-CoA = 1-(9Z-octadecenoyl)-2-(5Z,8Z,11Z,14Z-eicosatetraenoyl)-sn-glycero-3-phospho-1D-myo-inositol + CoA. The catalysed reaction is 1-(9Z-octadecenoyl)-sn-glycero-3-phospho-L-serine + (5Z,8Z,11Z,14Z)-eicosatetraenoyl-CoA = 1-(9Z-octadecenoyl)-2-(5Z,8Z,11Z,14Z-eicosatetraenoyl)-sn-glycero-3-phospho-L-serine + CoA. It catalyses the reaction 1-hexadecanoyl-sn-glycero-3-phosphate + (9Z)-octadecenoyl-CoA = 1-hexadecanoyl-2-(9Z-octadecenoyl)-sn-glycero-3-phosphate + CoA. It carries out the reaction 1-hexadecanoyl-sn-glycero-3-phosphate + (5Z,8Z,11Z,14Z)-eicosatetraenoyl-CoA = 1-hexadecanoyl-2-(5Z,8Z,11Z,14Z-eicosatetraenoyl)-sn-glycero-3-phosphate + CoA. The enzyme catalyses 1-heptadecanoyl-sn-glycero-3-phosphate + (5Z,8Z,11Z,14Z)-eicosatetraenoyl-CoA = 1-heptadecanoyl-2-(5Z,8Z,11Z,14Z)-eicosatetraenoyl-sn-glycero-3-phosphate + CoA. The catalysed reaction is 1-octadecanoyl-sn-glycero-3-phosphate + (9Z)-octadecenoyl-CoA = 1-octadecanoyl-2-(9Z-octadecenoyl)-sn-glycero-3-phosphate + CoA. It catalyses the reaction 1-octadecanoyl-sn-glycero-3-phosphate + (5Z,8Z,11Z,14Z)-eicosatetraenoyl-CoA = 1-octadecanoyl-2-(5Z,8Z,11Z,14Z-eicosatetraenoyl)-sn-glycero-3-phosphate + CoA. It carries out the reaction 1-(9Z-octadecenoyl)-sn-glycero-3-phosphate + hexadecanoyl-CoA = 1-hexadecanoyl-2-(9Z-octadecenoyl)-sn-glycero-3-phosphate + CoA. The enzyme catalyses 1-O-(9Z-octadecenyl)-sn-glycero-3-phosphate + (5Z,8Z,11Z,14Z)-eicosatetraenoyl-CoA = 1-O-(9Z-octadecenyl)-2-(5Z,8Z,11Z,14Z-eicosatetraenoyl)-sn-glycero-3-phosphate + CoA. The catalysed reaction is a 1-acyl-sn-glycero-3-phospho-(1D-myo-inositol) + (5Z,8Z,11Z,14Z)-eicosatetraenoyl-CoA = a 1-acyl-2-(5Z,8Z,11Z,14Z-eicosatetraenoyl)-sn-glycero-3-phospho-(1D-myo-inositol) + CoA. It functions in the pathway phospholipid metabolism; CDP-diacylglycerol biosynthesis; CDP-diacylglycerol from sn-glycerol 3-phosphate: step 2/3. Its activity is regulated as follows. In males, activity increases in an age-dependent fashion, maybe derived from the induction by sex-hormones. In terms of biological role, converts 1-acyl-sn-glycerol-3-phosphate (lysophosphatidic acid or LPA) into 1,2-diacyl-sn-glycerol-3-phosphate (phosphatidic acid or PA) by incorporating an acyl moiety at the sn-2 position of the glycerol backbone. Acts on LPA containing saturated or unsaturated fatty acids C16:0-C20:4 at the sn-1 position using C18:1, C20:4 or C18:2-CoA as the acyl donor. Also acts on lysophosphatidylcholine, lysophosphatidylinositol and lysophosphatidylserine using C18:1 or C20:4-CoA. Has a preference for arachidonoyl-CoA as a donor. Also has a modest lysophosphatidylinositol acyltransferase (LPIAT) activity, converts lysophosphatidylinositol (LPI) into phosphatidylinositol. This chain is 1-acyl-sn-glycerol-3-phosphate acyltransferase gamma, found in Mus musculus (Mouse).